Here is a 229-residue protein sequence, read N- to C-terminus: DNA mismatch repair protein MutH (229 aa).

The protein belongs to the MutH family.

It localises to the cytoplasm. Its function is as follows. Sequence-specific endonuclease that cleaves unmethylated GATC sequences. It is involved in DNA mismatch repair. The polypeptide is DNA mismatch repair protein MutH (Escherichia coli O17:K52:H18 (strain UMN026 / ExPEC)).